The primary structure comprises 261 residues: Hemin import ATP-binding protein HmuV (261 aa).

The ABC transporter domain maps to 7 to 243 (LRGQNLSLQF…EIIDAVYGYK (237 aa)). Position 39 to 46 (39 to 46 (GPNGAGKS)) interacts with ATP.

It belongs to the ABC transporter superfamily. Heme (hemin) importer (TC 3.A.1.14.5) family. The complex is composed of two ATP-binding proteins (HmuV), two transmembrane proteins (HmuU) and a solute-binding protein (HmuT).

Its subcellular location is the cell inner membrane. Part of the ABC transporter complex HmuTUV involved in hemin import. Responsible for energy coupling to the transport system. This Vibrio vulnificus (strain CMCP6) protein is Hemin import ATP-binding protein HmuV.